The following is a 141-amino-acid chain: Nucleoside diphosphate kinase (141 aa).

ATP-binding residues include K11, F59, R87, T93, R104, and N114. The active-site Pros-phosphohistidine intermediate is H117.

The protein belongs to the NDK family. In terms of assembly, homotetramer. The cofactor is Mg(2+).

The protein resides in the cytoplasm. It catalyses the reaction a 2'-deoxyribonucleoside 5'-diphosphate + ATP = a 2'-deoxyribonucleoside 5'-triphosphate + ADP. The catalysed reaction is a ribonucleoside 5'-diphosphate + ATP = a ribonucleoside 5'-triphosphate + ADP. Its function is as follows. Major role in the synthesis of nucleoside triphosphates other than ATP. The ATP gamma phosphate is transferred to the NDP beta phosphate via a ping-pong mechanism, using a phosphorylated active-site intermediate. The protein is Nucleoside diphosphate kinase of Nitrosospira multiformis (strain ATCC 25196 / NCIMB 11849 / C 71).